Here is a 391-residue protein sequence, read N- to C-terminus: Nutrient and stress factor 1 (391 aa).

The segment covering methionine 1–alanine 27 has biased composition (polar residues). The tract at residues methionine 1 to arginine 37 is disordered. 2 consecutive C2H2-type zinc fingers follow at residues phenylalanine 41–histidine 66 and phenylalanine 72–histidine 95. The tract at residues arginine 91–methionine 149 is disordered. A compositionally biased stretch (basic residues) spans alanine 96–lysine 109. Over residues proline 110–serine 134 the composition is skewed to low complexity. Serine 162 and serine 163 each carry phosphoserine. Residues alanine 326–aspartate 374 form a disordered region. A compositionally biased stretch (low complexity) spans asparagine 332–asparagine 344. Positions lysine 353 to threonine 369 are enriched in basic and acidic residues.

The protein resides in the nucleus. Functionally, transcription factor that participates in the transcriptional activation of glucose-repressed genes during exponential growth in non-fermentable carbon conditions. Also involved in salt-stress response. The polypeptide is Nutrient and stress factor 1 (USV1) (Saccharomyces cerevisiae (strain ATCC 204508 / S288c) (Baker's yeast)).